Consider the following 335-residue polypeptide: Fructose-1,6-bisphosphatase class 1 (335 aa).

Residues Glu-90, Asp-113, Leu-115, and Asp-116 each contribute to the Mg(2+) site. Residues 116 to 119 (DGSS), Asn-209, Tyr-242, and Lys-272 contribute to the substrate site. Glu-278 contributes to the Mg(2+) binding site.

This sequence belongs to the FBPase class 1 family. Homotetramer. It depends on Mg(2+) as a cofactor.

Its subcellular location is the cytoplasm. The enzyme catalyses beta-D-fructose 1,6-bisphosphate + H2O = beta-D-fructose 6-phosphate + phosphate. Its pathway is carbohydrate biosynthesis; gluconeogenesis. This chain is Fructose-1,6-bisphosphatase class 1, found in Mannheimia succiniciproducens (strain KCTC 0769BP / MBEL55E).